Reading from the N-terminus, the 281-residue chain is NADPH-dependent 7-cyano-7-deazaguanine reductase (281 aa).

88–90 (VES) provides a ligand contact to substrate. Residue 90 to 91 (SK) participates in NADPH binding. Cys189 acts as the Thioimide intermediate in catalysis. Asp196 functions as the Proton donor in the catalytic mechanism. Position 228-229 (228-229 (HE)) interacts with substrate. 257 to 258 (RG) serves as a coordination point for NADPH.

Belongs to the GTP cyclohydrolase I family. QueF type 2 subfamily. As to quaternary structure, homodimer.

It is found in the cytoplasm. It carries out the reaction 7-aminomethyl-7-carbaguanine + 2 NADP(+) = 7-cyano-7-deazaguanine + 2 NADPH + 3 H(+). It participates in tRNA modification; tRNA-queuosine biosynthesis. Catalyzes the NADPH-dependent reduction of 7-cyano-7-deazaguanine (preQ0) to 7-aminomethyl-7-deazaguanine (preQ1). The chain is NADPH-dependent 7-cyano-7-deazaguanine reductase from Klebsiella pneumoniae subsp. pneumoniae (strain ATCC 700721 / MGH 78578).